A 172-amino-acid chain; its full sequence is Protein-export protein SecB (172 aa).

Residues Met1–Ser22 are disordered. The segment covering Ala7–Asp20 has biased composition (polar residues).

It belongs to the SecB family. As to quaternary structure, homotetramer, a dimer of dimers. One homotetramer interacts with 1 SecA dimer.

Its subcellular location is the cytoplasm. One of the proteins required for the normal export of preproteins out of the cell cytoplasm. It is a molecular chaperone that binds to a subset of precursor proteins, maintaining them in a translocation-competent state. It also specifically binds to its receptor SecA. The protein is Protein-export protein SecB of Sphingopyxis alaskensis (strain DSM 13593 / LMG 18877 / RB2256) (Sphingomonas alaskensis).